A 387-amino-acid chain; its full sequence is 3-ketoacyl-CoA thiolase (387 aa).

Cysteine 91 acts as the Acyl-thioester intermediate in catalysis. Active-site proton acceptor residues include histidine 343 and cysteine 373.

This sequence belongs to the thiolase-like superfamily. Thiolase family. As to quaternary structure, heterotetramer of two alpha chains (FadB) and two beta chains (FadA).

Its subcellular location is the cytoplasm. It catalyses the reaction an acyl-CoA + acetyl-CoA = a 3-oxoacyl-CoA + CoA. The protein operates within lipid metabolism; fatty acid beta-oxidation. In terms of biological role, catalyzes the final step of fatty acid oxidation in which acetyl-CoA is released and the CoA ester of a fatty acid two carbons shorter is formed. This chain is 3-ketoacyl-CoA thiolase, found in Shewanella frigidimarina (strain NCIMB 400).